A 221-amino-acid polypeptide reads, in one-letter code: UPF0758 protein YicR (221 aa).

The region spanning 99–221 (ALLSPEMTLE…YVSFAERGWI (123 aa)) is the MPN domain. Positions 170, 172, and 183 each coordinate Zn(2+). The short motif at 170–183 (HNHPSGCAEPSKAD) is the JAMM motif element.

Belongs to the UPF0758 family. YicR subfamily.

The polypeptide is UPF0758 protein YicR (Salmonella arizonae (strain ATCC BAA-731 / CDC346-86 / RSK2980)).